We begin with the raw amino-acid sequence, 327 residues long: COP9 signalosome complex subunit 6 (327 aa).

One can recognise an MPN domain in the interval 41-174 (VALHPLVILN…VSVFESVIDI (134 aa)). An interaction with Vpr region spans residues 211 to 327 (SGENSTVAEH…IGRRMRGLFF (117 aa)).

It belongs to the peptidase M67A family. CSN6 subfamily. In terms of assembly, component of the CSN complex, composed of COPS1/GPS1, COPS2, COPS3, COPS4, COPS5, COPS6, COPS7 (COPS7A or COPS7B), COPS8 and COPS9 isoform 1. In the complex, it probably interacts directly with COPS2, COPS4, COPS5, COPS7 (COPS7A or COPS7B) and COPS9 isoform 1. Interacts with the translation initiation factor EIF3S6. Interacts weakly with RBX1. Directly interacts with COP1 and 14-3-3 protein sigma/SFN. Interacts with ERCC6. As to quaternary structure, (Microbial infection) Interacts with the HIV-1 protein Vpr. In terms of tissue distribution, widely expressed.

It is found in the nucleus. Its subcellular location is the cytoplasm. The protein localises to the perinuclear region. Component of the COP9 signalosome complex (CSN), a complex involved in various cellular and developmental processes. The CSN complex is an essential regulator of the ubiquitin (Ubl) conjugation pathway by mediating the deneddylation of the cullin subunits of SCF-type E3 ligase complexes, leading to decrease the Ubl ligase activity of SCF-type complexes such as SCF, CSA or DDB2. The complex is also involved in phosphorylation of p53/TP53, c-jun/JUN, IkappaBalpha/NFKBIA, ITPK1 and IRF8, possibly via its association with CK2 and PKD kinases. CSN-dependent phosphorylation of TP53 and JUN promotes and protects degradation by the Ubl system, respectively. Has some glucocorticoid receptor-responsive activity. Stabilizes COP1 through reducing COP1 auto-ubiquitination and decelerating COP1 turnover rate, hence regulates the ubiquitination of COP1 targets. In Homo sapiens (Human), this protein is COP9 signalosome complex subunit 6 (COPS6).